The chain runs to 190 residues: Threonylcarbamoyl-AMP synthase (190 aa).

Residues 7 to 190 (ADAISFIVDV…ALTGELFRQG (184 aa)) enclose the YrdC-like domain.

It belongs to the SUA5 family. TsaC subfamily.

It localises to the cytoplasm. The enzyme catalyses L-threonine + hydrogencarbonate + ATP = L-threonylcarbamoyladenylate + diphosphate + H2O. Functionally, required for the formation of a threonylcarbamoyl group on adenosine at position 37 (t(6)A37) in tRNAs that read codons beginning with adenine. Catalyzes the conversion of L-threonine, HCO(3)(-)/CO(2) and ATP to give threonylcarbamoyl-AMP (TC-AMP) as the acyladenylate intermediate, with the release of diphosphate. The chain is Threonylcarbamoyl-AMP synthase from Cronobacter sakazakii (strain ATCC BAA-894) (Enterobacter sakazakii).